A 384-amino-acid polypeptide reads, in one-letter code: MRYMTAGESHGKGLSVIIEGIPSGLIIDFDQVQREMTRRQGGYGRGRRMQIEQDAVDVRGGIRHGYTTGAPISLFIENKDHTHWTKVMQAEPLQEELERPRTLTRPRPGHADLVGGLKYGHRDLRDVLERSSARETAARVAVGAIAKQLLGQLGIDVFSHVRSIGGIDADFVNPMEYREVIEASPVRCADEAAAERMMAAIDQAKKDGDTLGGEVEVVVTDMMPGIGSFTQNETKLDSRIARAVISVNAMKAVGFGDGFDLARRKGSTVQDEILHDETGYFRKTNHLGGIEGGMSTGMPIRVQVAMKPIPTLYRPLQSVDIETKEPFVAQVERSDACAVPAAAVVLEAVVAVEIAAAVLEMFGTSTLDRLKQAVTAYREEVRLF.

Residues Arg39 and Arg45 each contribute to the NADP(+) site. FMN contacts are provided by residues 130–132 (RSS), 248–249 (NA), Gly292, 307–311 (KPIPT), and Arg333.

This sequence belongs to the chorismate synthase family. In terms of assembly, homotetramer. The cofactor is FMNH2.

It catalyses the reaction 5-O-(1-carboxyvinyl)-3-phosphoshikimate = chorismate + phosphate. It functions in the pathway metabolic intermediate biosynthesis; chorismate biosynthesis; chorismate from D-erythrose 4-phosphate and phosphoenolpyruvate: step 7/7. Functionally, catalyzes the anti-1,4-elimination of the C-3 phosphate and the C-6 proR hydrogen from 5-enolpyruvylshikimate-3-phosphate (EPSP) to yield chorismate, which is the branch point compound that serves as the starting substrate for the three terminal pathways of aromatic amino acid biosynthesis. This reaction introduces a second double bond into the aromatic ring system. This chain is Chorismate synthase, found in Exiguobacterium sibiricum (strain DSM 17290 / CCUG 55495 / CIP 109462 / JCM 13490 / 255-15).